The sequence spans 366 residues: MLRTEEMILNVGPQHPSTHGVFRLILKIDGEIIQEATPVIGYLHRGTEKIAEGLQYTQIIPYTDRMDYLSAMTNNYVLCHAVETMMGIEVPERAEYLRVLAMELGRIASHLVWWGTYLLDLGATSPFLYAFREREMIINLLNELSGARLTFNYMRIGGVKWDAPDGWIDKVKQFVPYMREKLAGYHDLVTGNEIFRERVTGVGRYTKEEAISYSLSGVNLRSTGVKWDLRKDEPYSVYDRFDFDVPVREGGDCLARYECRMAEIEQSLRIIEQACEQFPADGPIMGKLPRIIKAPPGETFVRIEAPRGEIGCYIASDGKKEPYRLKFRRPSFYNLQILPKLLKGENLANVIAILGSIDIVLGEVDG.

It belongs to the complex I 49 kDa subunit family. NDH-1 is composed of 14 different subunits. Subunits NuoB, C, D, E, F, and G constitute the peripheral sector of the complex.

Its subcellular location is the cell membrane. The enzyme catalyses a quinone + NADH + 5 H(+)(in) = a quinol + NAD(+) + 4 H(+)(out). NDH-1 shuttles electrons from NADH, via FMN and iron-sulfur (Fe-S) centers, to quinones in the respiratory chain. The immediate electron acceptor for the enzyme in this species is believed to be a menaquinone. Couples the redox reaction to proton translocation (for every two electrons transferred, four hydrogen ions are translocated across the cytoplasmic membrane), and thus conserves the redox energy in a proton gradient. This Geobacillus thermodenitrificans (strain NG80-2) protein is NADH-quinone oxidoreductase subunit D.